The following is a 523-amino-acid chain: Glucose-1-phosphate adenylyltransferase large subunit 1, chloroplastic/amyloplastic (523 aa).

The N-terminal 49 residues, 1-49 (MSSMQFSSVLPLEGKACVSPVRREGSACERLKIGDSSSIRHERASRRMC), are a transit peptide targeting the chloroplast.

This sequence belongs to the bacterial/plant glucose-1-phosphate adenylyltransferase family. As to quaternary structure, heterotetramer. In terms of tissue distribution, starchy endosperm and roots.

It localises to the plastid. It is found in the chloroplast. Its subcellular location is the amyloplast. The enzyme catalyses alpha-D-glucose 1-phosphate + ATP + H(+) = ADP-alpha-D-glucose + diphosphate. Its pathway is glycan biosynthesis; starch biosynthesis. With respect to regulation, highly active without 3'phosphoglycerate, and is only slightly affected by the activator 3'phosphoglycerate and inhibitor orthophosphate. Its function is as follows. This protein plays a role in synthesis of starch. It catalyzes the synthesis of the activated glycosyl donor, ADP-glucose from Glc-1-P and ATP. The sequence is that of Glucose-1-phosphate adenylyltransferase large subunit 1, chloroplastic/amyloplastic from Hordeum vulgare (Barley).